Here is a 482-residue protein sequence, read N- to C-terminus: MTAAVTQDNTSRTGAAAGRVVRVIGPVVDVEFPRGAIPELFNALHADITLTSVAKTLTLEVAQHLGDNIVRTISMQPTDGLVRGATVTDTGKPISVPVGDVVKGHVFNALGDCLDTPGLGRDGEQWGIHRKPPSFDQLEGKTELLETGIKVIDLLTPYVKGGKIGLFGGAGVGKTVLIQEMITRIAREFSGTSVFAGVGERTREGTDLHLEMEEMGVLQDTALVFGQMDEPPGTRMRVALSALTMAEYFRDVQHQDVLLFIDNIFRFTQAGSEVSTLLGRMPSAVGYQPTLADEMGELQERITSTRGRSITSLQAIYVPADDYTDPAPATTFAHLDATTELSRPISQKGIYPAVDPLTSTSRILEASIVGDRHFAVANEVKRILQKYKELQDIIAILGMDELSEEDKVLVGRARRLEKFLGQNFIVAEKFTGQPGSVVPLEQTIDDFDRVCKGEFDHYPEQAFNSCGGLDDVEKAAKKIAGK.

An ATP-binding site is contributed by 168 to 175; it reads GGAGVGKT.

Belongs to the ATPase alpha/beta chains family. F-type ATPases have 2 components, CF(1) - the catalytic core - and CF(0) - the membrane proton channel. CF(1) has five subunits: alpha(3), beta(3), gamma(1), delta(1), epsilon(1). CF(0) has three main subunits: a(1), b(2) and c(9-12). The alpha and beta chains form an alternating ring which encloses part of the gamma chain. CF(1) is attached to CF(0) by a central stalk formed by the gamma and epsilon chains, while a peripheral stalk is formed by the delta and b chains.

It localises to the cell membrane. The catalysed reaction is ATP + H2O + 4 H(+)(in) = ADP + phosphate + 5 H(+)(out). In terms of biological role, produces ATP from ADP in the presence of a proton gradient across the membrane. The catalytic sites are hosted primarily by the beta subunits. This chain is ATP synthase subunit beta, found in Nocardia farcinica (strain IFM 10152).